The sequence spans 1012 residues: Ubiquitin-like modifier-activating enzyme 7 (1012 aa).

The stretch at 23–159 (GSPAMQRIQG…DTRGLVGQLF (137 aa)) is one 1-1 repeat. Positions 23 to 575 (GSPAMQRIQG…GTWGSATVFM (553 aa)) are 2 approximate repeats. A Phosphoserine modification is found at Ser-266. A 1-2 repeat occupies 423–575 (GAGFQEKLRR…GTWGSATVFM (153 aa)). 442–471 (AIGCELLKVFALVGLGAGNSGGLTVVDMDH) contributes to the ATP binding site. The active-site Glycyl thioester intermediate is Cys-599.

This sequence belongs to the ubiquitin-activating E1 family. (Microbial infection) Interacts with human cytomegalovirus proteins NEC2/UL50 and UL26; these interactions inhibit ISGylation and cause proteasomal degradation of UBA7. In terms of assembly, (Microbial infection) Interacts with rotavirus non-structural protein 5 (NSP5); this interaction promotes UBA7 proteasomal degradation. As to quaternary structure, monomer. Binds and is involved in the conjugation of G1P2/ISG15. ISGylated. Post-translationally, ubiquitinated by RNF170. In terms of tissue distribution, expressed in a variety of normal and tumor cell types, but is reduced in lung cancer cell lines.

It localises to the cytoplasm. It is found in the nucleus. It participates in protein modification; protein ubiquitination. E1-activating enzyme that catalyzes the covalent conjugation of the ubiquitin-like protein product of ISG15 to additional interferon stimulated proteins (ISGs) as well as other cellular proteins such as P53 in a process termed protein ISGylation. Plays an essential role in antiviral immunity together with ISG15 by restricting the replication of many viruses including rabies virus, influenza virus, sindbis virus, rotavirus or human cytomegalovirus. For example, ISG15 modification of influenza A protein NS1 disrupts the association of the NS1 with importin-alpha leading to NS1 nuclear import inhibition. ISGylation of human cytomegalovirs protein UL26 regulates its stability and inhibits its activities to suppress NF-kappa-B signaling. This Homo sapiens (Human) protein is Ubiquitin-like modifier-activating enzyme 7.